The primary structure comprises 569 residues: Linoleate hydratase (569 aa).

Position 87 (Tyr87) interacts with FAD. Catalysis depends on Tyr205, which acts as the Proton donor. The FAD site is built by Val254, Ser300, and Thr524.

It belongs to the oleate hydratase family. FAD serves as cofactor.

It localises to the cell membrane. Its subcellular location is the cytoplasm. The catalysed reaction is (9Z,12Z)-octadecadienoate + H2O = (10S)-hydroxy-(12Z)-octadecenoate. The enzyme catalyses (10E,12Z)-octadecadienoate + H2O = (10S)-hydroxy-(12Z)-octadecenoate. It catalyses the reaction (9Z)-octadecenoate + H2O = 10-hydroxyoctadecanoate. It carries out the reaction (10E)-octadecenoate + H2O = 10-hydroxyoctadecanoate. The catalysed reaction is (9E,11E)-octadecadienoate + H2O = 10-hydroxy-(11E)-octadecenoate. The enzyme catalyses (9Z,11E)-octadecadienoate + H2O = 10-hydroxy-(11E)-octadecenoate. It catalyses the reaction (9Z)-hexadecenoate + H2O = 10-hydroxyhexadecanoate. It carries out the reaction (9Z,12Z,15Z)-octadecatrienoate + H2O = (10S)-hydroxy-(12Z,15Z)-octadecadienoate. The catalysed reaction is (6Z,9Z,12Z)-octadecatrienoate + H2O = (10S)-hydroxy-(6Z,12Z)-octadecadienoate. The enzyme catalyses (6Z,9Z,12Z,15Z)-octadecatetraenoate + H2O = (10S)-hydroxy-(6Z,12Z,15Z)-octadecatrienoate. It functions in the pathway lipid metabolism; fatty acid metabolism. The addition of NADH or NADPH highly increases catalytic activity, likely by reducing the cofactor FAD to FADH2. The hydration and dehydration reactions are strongly inhibited by Ag(+), Fe(2+), Cu(2+), Zn(2+), Hg(2+), and Fe(3+). In terms of biological role, is involved in a saturation metabolic pathway of polyunsaturated fatty acids, that detoxifies unsaturated fatty acids and generates hydroxy fatty acids, oxo fatty acids, conjugated fatty acids such as conjugated linoleic acids (CLAs), and partially saturated trans-fatty acids as intermediates. CLA-HY catalyzes the hydration and dehydration steps in the production of 10-hydroxy-cis-12-octadecenoate, trans-10,cis-12-CLA, cis-9,trans-11-CLA, trans-9,trans-11-CLA, oleate and trans-10-octadecenoate during linoleate metabolism. Is also able to hydrate palmitoleic acid (cis-9-hexadecenoic acid), oleic acid, alpha-linolenic acid, gamma-linolenic acid, and stearidonic acid into the corresponding 10-hydroxy fatty acids, and dehydrate 10-hydroxy-cis-12,cis-15-octadecadienoic acid, 10-hydroxy-cis-6,cis-12-octadecadienoic acid, and 10-hydroxyoctadecanoic acid into the corresponding fatty acids with cis double bonds at the Delta9 position. As part of the gut microbiome, this enzyme modifies host fatty acid composition and is expected to improve human health by altering lipid metabolism related to the onset of metabolic syndrome. Shows regioselectivity for Delta9 double bond hydration, generating C10 hydroxy groups in the (S)-configuration with high enantioselectivity, when another double bond is in position 12. Is not able to hydrate fatty acids with a trans carbon-carbon double bond at Delta9 position (elaidic acid, trans-9-octadecenoic acid), fatty acid esters (methyl linoleate, monolinolein, dilinolein, and trilinolein), and conjugated fatty acids (conjugated linoleic acids), as well as fatty acids with other chain lengths, such as myristoleic acid (cis-9-tetradecenoic acid), arachidonic acid (cis-5,cis-8,cis-11,cis-14-eicosatetraenoic acid), EPA (cis-5,cis-8,cis-11,cis-14,cis-17-eicosapentaenoic acid), DHA (cis-4,cis-7,cis-10,cis-13,cis-16,cis-19-docosahexaenoic acid) and fatty acids with a cis carbon-carbon double bond at Delta11 position, such as cis-vaccenic acid and cis-11-octadecenoic acid, or fatty alcohols, such as linoleyl alcohol. Is not able to dehydrate 12-hydroxy, 3-hydroxy, and 9-hydroxy fatty acids. The polypeptide is Linoleate hydratase (Lactiplantibacillus plantarum (Lactobacillus plantarum)).